The sequence spans 276 residues: Shikimate dehydrogenase (NADP(+)) (276 aa).

Residues 18-20 (SKS) and threonine 65 contribute to the shikimate site. The active-site Proton acceptor is lysine 69. Glutamate 81 contacts NADP(+). The shikimate site is built by asparagine 90 and aspartate 106. Residues 130-134 (GAGGA), 154-159 (NRTSSK), and methionine 217 contribute to the NADP(+) site. Tyrosine 219 lines the shikimate pocket. Glycine 241 lines the NADP(+) pocket.

Belongs to the shikimate dehydrogenase family. Homodimer.

It catalyses the reaction shikimate + NADP(+) = 3-dehydroshikimate + NADPH + H(+). The protein operates within metabolic intermediate biosynthesis; chorismate biosynthesis; chorismate from D-erythrose 4-phosphate and phosphoenolpyruvate: step 4/7. Its function is as follows. Involved in the biosynthesis of the chorismate, which leads to the biosynthesis of aromatic amino acids. Catalyzes the reversible NADPH linked reduction of 3-dehydroshikimate (DHSA) to yield shikimate (SA). The sequence is that of Shikimate dehydrogenase (NADP(+)) from Vibrio atlanticus (strain LGP32) (Vibrio splendidus (strain Mel32)).